We begin with the raw amino-acid sequence, 393 residues long: Acetyl-CoA acetyltransferase (393 aa).

The active-site Acyl-thioester intermediate is C88. Residues H349 and C379 each act as proton acceptor in the active site.

It belongs to the thiolase-like superfamily. Thiolase family. In terms of assembly, homotetramer.

Its subcellular location is the cytoplasm. The enzyme catalyses 2 acetyl-CoA = acetoacetyl-CoA + CoA. It participates in biopolymer metabolism; poly-(R)-3-hydroxybutanoate biosynthesis. Its activity is regulated as follows. The condensation reaction is inhibited by free CoA. The cleavage reaction is characterized by substrate inhibition by acetoacetyl-CoA, which is partially relieved by free CoA. In terms of biological role, catalyzes the condensation of two acetyl-coA units to form acetoacetyl-CoA. Is involved in the biosynthesis of polyhydroxybutyrate (PHB), which is accumulated as an intracellular energy reserve material when cells grow under conditions of nutrient limitation. Also catalyzes the reverse reaction, i.e. the cleavage of acetoacetyl-CoA, and is therefore also involved in the reutilization of PHB. This is Acetyl-CoA acetyltransferase from Cupriavidus necator (strain ATCC 17699 / DSM 428 / KCTC 22496 / NCIMB 10442 / H16 / Stanier 337) (Ralstonia eutropha).